A 164-amino-acid polypeptide reads, in one-letter code: Protein-export protein SecB (164 aa).

The protein belongs to the SecB family. As to quaternary structure, homotetramer, a dimer of dimers. One homotetramer interacts with 1 SecA dimer.

It is found in the cytoplasm. Its function is as follows. One of the proteins required for the normal export of preproteins out of the cell cytoplasm. It is a molecular chaperone that binds to a subset of precursor proteins, maintaining them in a translocation-competent state. It also specifically binds to its receptor SecA. This Stutzerimonas stutzeri (strain A1501) (Pseudomonas stutzeri) protein is Protein-export protein SecB.